Reading from the N-terminus, the 246-residue chain is Bis(5'-nucleosyl)-tetraphosphatase PrpE [asymmetrical] (246 aa).

This sequence belongs to the PrpE family. Ni(2+) is required as a cofactor.

The enzyme catalyses P(1),P(4)-bis(5'-guanosyl) tetraphosphate + H2O = GMP + GTP + 2 H(+). In terms of biological role, asymmetrically hydrolyzes Ap4p to yield AMP and ATP. This chain is Bis(5'-nucleosyl)-tetraphosphatase PrpE [asymmetrical], found in Bacillus thuringiensis subsp. konkukian (strain 97-27).